Reading from the N-terminus, the 257-residue chain is Tryptophan synthase alpha chain (257 aa).

Residues glutamate 47 and aspartate 58 each act as proton acceptor in the active site.

The protein belongs to the TrpA family. As to quaternary structure, tetramer of two alpha and two beta chains.

The enzyme catalyses (1S,2R)-1-C-(indol-3-yl)glycerol 3-phosphate + L-serine = D-glyceraldehyde 3-phosphate + L-tryptophan + H2O. The protein operates within amino-acid biosynthesis; L-tryptophan biosynthesis; L-tryptophan from chorismate: step 5/5. Its function is as follows. The alpha subunit is responsible for the aldol cleavage of indoleglycerol phosphate to indole and glyceraldehyde 3-phosphate. This Listeria welshimeri serovar 6b (strain ATCC 35897 / DSM 20650 / CCUG 15529 / CIP 8149 / NCTC 11857 / SLCC 5334 / V8) protein is Tryptophan synthase alpha chain.